Reading from the N-terminus, the 191-residue chain is Large ribosomal subunit protein bL9 (191 aa).

Positions 171–191 are disordered; sequence EDALKPEDFFNPEAELESEEE.

Belongs to the bacterial ribosomal protein bL9 family.

Its function is as follows. Binds to the 23S rRNA. This chain is Large ribosomal subunit protein bL9, found in Rhizobium meliloti (strain 1021) (Ensifer meliloti).